Here is a 66-residue protein sequence, read N- to C-terminus: Beta-mammal toxin Cv3 (66 aa).

One can recognise an LCN-type CS-alpha/beta domain in the interval 1 to 66 (KEGYIVNYYD…VWPLPNKTCN (66 aa)). 4 cysteine pairs are disulfide-bonded: cysteine 12–cysteine 65, cysteine 16–cysteine 41, cysteine 25–cysteine 46, and cysteine 29–cysteine 48.

In terms of tissue distribution, expressed by the venom gland.

The protein localises to the secreted. Functionally, beta toxins bind voltage-independently at site-4 of sodium channels (Nav) and reduces peak current and shifts the voltage of activation toward more negative potentials thereby affecting sodium channel activation and promoting spontaneous and repetitive firing. This toxin is strongly toxic to mice. The chain is Beta-mammal toxin Cv3 from Centruroides villegasi (Scorpion).